We begin with the raw amino-acid sequence, 572 residues long: Dihydroxy-acid dehydratase (572 aa).

Cys-57 is a [2Fe-2S] cluster binding site. Asp-89 is a Mg(2+) binding site. [2Fe-2S] cluster is bound at residue Cys-130. Mg(2+) contacts are provided by Asp-131 and Lys-132. An N6-carboxylysine modification is found at Lys-132. Cys-202 contributes to the [2Fe-2S] cluster binding site. Glu-453 serves as a coordination point for Mg(2+). Ser-479 functions as the Proton acceptor in the catalytic mechanism.

This sequence belongs to the IlvD/Edd family. Homodimer. [2Fe-2S] cluster is required as a cofactor. The cofactor is Mg(2+).

The catalysed reaction is (2R)-2,3-dihydroxy-3-methylbutanoate = 3-methyl-2-oxobutanoate + H2O. It carries out the reaction (2R,3R)-2,3-dihydroxy-3-methylpentanoate = (S)-3-methyl-2-oxopentanoate + H2O. Its pathway is amino-acid biosynthesis; L-isoleucine biosynthesis; L-isoleucine from 2-oxobutanoate: step 3/4. The protein operates within amino-acid biosynthesis; L-valine biosynthesis; L-valine from pyruvate: step 3/4. Functionally, functions in the biosynthesis of branched-chain amino acids. Catalyzes the dehydration of (2R,3R)-2,3-dihydroxy-3-methylpentanoate (2,3-dihydroxy-3-methylvalerate) into 2-oxo-3-methylpentanoate (2-oxo-3-methylvalerate) and of (2R)-2,3-dihydroxy-3-methylbutanoate (2,3-dihydroxyisovalerate) into 2-oxo-3-methylbutanoate (2-oxoisovalerate), the penultimate precursor to L-isoleucine and L-valine, respectively. This chain is Dihydroxy-acid dehydratase, found in Streptococcus sanguinis (strain SK36).